Reading from the N-terminus, the 284-residue chain is Phosphatidylglycerol--prolipoprotein diacylglyceryl transferase (284 aa).

Helical transmembrane passes span 19 to 39, 60 to 80, 98 to 118, 130 to 150, 199 to 219, 225 to 245, and 258 to 278; these read ISFYWYGMMYVLSFIFAMWFL, LLYLNFLGVVIGGRIGYVLFY, GGMSFHGGLIGVIISIMWFSY, FIVPAVPVGLGLGRLGNFING, QLYEMILEGIVLFVVIYIFSC, GSISGLFLLLYGLFRIIIEFF, and FITLGQVLSFPMVIFGFIIMY. Arg-143 contributes to the a 1,2-diacyl-sn-glycero-3-phospho-(1'-sn-glycerol) binding site.

This sequence belongs to the Lgt family.

The protein localises to the cell inner membrane. It catalyses the reaction L-cysteinyl-[prolipoprotein] + a 1,2-diacyl-sn-glycero-3-phospho-(1'-sn-glycerol) = an S-1,2-diacyl-sn-glyceryl-L-cysteinyl-[prolipoprotein] + sn-glycerol 1-phosphate + H(+). It participates in protein modification; lipoprotein biosynthesis (diacylglyceryl transfer). Functionally, catalyzes the transfer of the diacylglyceryl group from phosphatidylglycerol to the sulfhydryl group of the N-terminal cysteine of a prolipoprotein, the first step in the formation of mature lipoproteins. The polypeptide is Phosphatidylglycerol--prolipoprotein diacylglyceryl transferase (Blochmanniella floridana).